Consider the following 274-residue polypeptide: GPN-loop GTPase 3 (274 aa).

13-18 (GVGKST) is a binding site for GTP. The Gly-Pro-Asn (GPN)-loop; involved in dimer interface signature appears at 70 to 72 (GPN). 173 to 176 (SKID) provides a ligand contact to GTP. The segment at 255 to 274 (SESQEPKEPVEEIEEEVDFE) is disordered. Residues 265–274 (EEIEEEVDFE) show a composition bias toward acidic residues.

Belongs to the GPN-loop GTPase family. In terms of assembly, heterodimers with GPN1 or GPN2. Binds to RNA polymerase II (RNAPII).

Functionally, small GTPase required for proper nuclear import of RNA polymerase II and III (RNAPII and RNAPIII). May act at an RNAP assembly step prior to nuclear import. This is GPN-loop GTPase 3 from Debaryomyces hansenii (strain ATCC 36239 / CBS 767 / BCRC 21394 / JCM 1990 / NBRC 0083 / IGC 2968) (Yeast).